The following is a 1308-amino-acid chain: MLKLKKLQLLGFKSFCDRTELKFPGDGIAAIVGPNGCGKSNIADAISWVLGEQSAKSLRGIHMQDVIFAGTRDRKPTGMAEVSLTLIDPEQYEGKIVEPEIEIRDEMPDDWDEAAAREASMEEVDEYTAEVQPGTNTEAEATEQQAAPSEGAAPTTEATAPSTENEAAPSEVAEGQPSDAQAAVINPNAVVLKIRRRKFNTNRFKKGEICVTRRLFRSGDSEYLLNGKLSRLRDVHDIFMGTGLGPESYAIIEQGRIGQILSSKPTDRRAIIEEAAGITKYKTKKRLAEARLEDAKSNLARVNDIFDEVTRQMNSLKRQAAKAERYAKLRDEMREKLRVVLASKFALIDAEIAGLEAELTTVTEEIATRTDAVQQMDNEHGERVQRGYAIDAEAKQNRESLNNVSREMDRAAQRRRTNEERCAELVARSAGAEAEIQNTTEQLGRLEEELATNRQVLESAAADVAVAQSDLQTKQQEASAAAANLMNVEREQEQRRSQIFQAVNAASNVRNRITQAEERIANLDREHGRVTGELSSATLQLESFGGQRGQLGLEFESANTRVNALSSEITDARGSLQQKRQEEIEAKRHVDTLRAEYATLLGKKGSLESVINEHGYSTESVKRLFQSGGLREGNTPAGVLADFLEVEDKYEHVVEDFLRDELNYVVVKSWGAADEGLRLLKGDVDGRATFLVHPSDSQAKFSFVLDESMRLPFTPDRVTPMKNCIRVLNGFGKSLEVVLPKLGNGYIVPDPAIGRELALENPDAFFLSQSGECFHNVTVTGGKQRSQGPLSLKRELRDVMRCIDDVERSLRDGEARVLMLGKEIAELTSLLQRLEDEKREGEKQAMTSGHTLRQLENEMARVRDRHATYERELQRVSNEKSERENAIGGLRMELEAAEARHQELEAAMNAATQSLDELRTARDNASHAASEARAQAAALEERHRAAASSLQRIESMVQEVSARIGKLKGQVESAAAEKQQRESENETIAEQLVTWTAEREAAEARDRELQTESEQVRARIAEIEEELKTARQALDAARDRRGELHASVARLQSDGEHMAETCVQELSVTRPDLMAIEELPRLTGDELAVADTEQKDMRTKLENMGPVNMMALEEYKETAQRHEFLETQRKDLLDSIENTQNTIKEIDQITKVKFDEAFAAINENFGKAFKKLFGGGQGFMKLTDELNSSDSGIDVIASPPGKKLQNVLLLSGGEKTLTAFSLLVGIFQYAPSPFCILDEVDAPLDETNVARFNELVKEMSMQTQFILITHSKRTMATAPVMYGVTMQEPGVSKIVSVRFGEEAARATA.

An ATP-binding site is contributed by 34-41 (PNGCGKSN). The interval 115 to 181 (AAREASMEEV…VAEGQPSDAQ (67 aa)) is disordered. The span at 137-169 (TEAEATEQQAAPSEGAAPTTEATAPSTENEAAP) shows a compositional bias: low complexity. The stretch at 278–600 (ITKYKTKKRL…DTLRAEYATL (323 aa)) forms a coiled coil. An SMC hinge domain is found at 637–757 (AGVLADFLEV…VPDPAIGREL (121 aa)). Coiled coils occupy residues 791–1046 (SLKR…ELHA) and 1110–1148 (MALE…EIDQ).

It belongs to the SMC family. As to quaternary structure, homodimer.

The protein resides in the cytoplasm. In terms of biological role, required for chromosome condensation and partitioning. This chain is Chromosome partition protein Smc, found in Koribacter versatilis (strain Ellin345).